We begin with the raw amino-acid sequence, 376 residues long: Succinyl-diaminopimelate desuccinylase (376 aa).

His-67 contributes to the Zn(2+) binding site. The active site involves Asp-69. Zn(2+) is bound at residue Asp-100. The active-site Proton acceptor is the Glu-134. Residues Glu-135, Glu-163, and His-349 each coordinate Zn(2+).

The protein belongs to the peptidase M20A family. DapE subfamily. As to quaternary structure, homodimer. Zn(2+) is required as a cofactor. Requires Co(2+) as cofactor.

The catalysed reaction is N-succinyl-(2S,6S)-2,6-diaminopimelate + H2O = (2S,6S)-2,6-diaminopimelate + succinate. Its pathway is amino-acid biosynthesis; L-lysine biosynthesis via DAP pathway; LL-2,6-diaminopimelate from (S)-tetrahydrodipicolinate (succinylase route): step 3/3. Its function is as follows. Catalyzes the hydrolysis of N-succinyl-L,L-diaminopimelic acid (SDAP), forming succinate and LL-2,6-diaminopimelate (DAP), an intermediate involved in the bacterial biosynthesis of lysine and meso-diaminopimelic acid, an essential component of bacterial cell walls. The polypeptide is Succinyl-diaminopimelate desuccinylase (Xanthomonas campestris pv. campestris (strain B100)).